The following is a 519-amino-acid chain: Dihydropyrimidinase (519 aa).

Zn(2+) contacts are provided by His-67 and His-69. Ser-79 is subject to Phosphoserine. Residue Lys-159 participates in Zn(2+) binding. At Lys-159 the chain carries N6-carboxylysine. A substrate-binding site is contributed by Tyr-164. Positions 192 and 248 each coordinate Zn(2+). Lys-256 is modified (N6-succinyllysine). Zn(2+) is bound at residue Asp-326. Asn-347 lines the substrate pocket. Residue Thr-510 is modified to Phosphothreonine.

This sequence belongs to the metallo-dependent hydrolases superfamily. Hydantoinase/dihydropyrimidinase family. Homotetramer. The cofactor is Zn(2+). In terms of processing, carboxylation allows a single lysine to coordinate two zinc ions.

It catalyses the reaction 5,6-dihydrouracil + H2O = 3-(carbamoylamino)propanoate + H(+). In terms of biological role, catalyzes the second step of the reductive pyrimidine degradation, the reversible hydrolytic ring opening of dihydropyrimidines. Can catalyze the ring opening of 5,6-dihydrouracil to N-carbamyl-alanine and of 5,6-dihydrothymine to N-carbamyl-amino isobutyrate. This Rattus norvegicus (Rat) protein is Dihydropyrimidinase (Dpys).